Reading from the N-terminus, the 429-residue chain is Histidinol dehydrogenase (429 aa).

NAD(+) contacts are provided by Tyr-130, Gln-191, and Asn-214. Substrate is bound by residues Ser-237, Gln-259, and His-262. Positions 259 and 262 each coordinate Zn(2+). Residues Glu-327 and His-328 each act as proton acceptor in the active site. Positions 328, 361, 415, and 420 each coordinate substrate. Asp-361 contributes to the Zn(2+) binding site. His-420 provides a ligand contact to Zn(2+).

This sequence belongs to the histidinol dehydrogenase family. Zn(2+) is required as a cofactor.

The catalysed reaction is L-histidinol + 2 NAD(+) + H2O = L-histidine + 2 NADH + 3 H(+). The protein operates within amino-acid biosynthesis; L-histidine biosynthesis; L-histidine from 5-phospho-alpha-D-ribose 1-diphosphate: step 9/9. Its function is as follows. Catalyzes the sequential NAD-dependent oxidations of L-histidinol to L-histidinaldehyde and then to L-histidine. In Geobacter sulfurreducens (strain ATCC 51573 / DSM 12127 / PCA), this protein is Histidinol dehydrogenase.